The sequence spans 664 residues: MKRRNADCSKLRRPLKRNRITEGIHSSTFLYLKFLVVWALVLLADFVLEFRFEYLWPFWLFIRSVYDSFRYQGLAFSVFFVCVAFTSDIICLLFIPKQWLFFAASTYVWVQYVWHTERGVCLPTVSLWILFVYIEAAIRFKDLKHFHVDLCRPFAAHCIGYPVVTLGFGFKSYVSYKMRLRKQKEVQKENEFYMQLLQQALPPEQQMLQRQERETEEATSKGMSEADSVLVAQNGTAINKKLPISLPELEYKEKGKDSAKDKKQQQHSIGINNNILQTVDAKLQDIEYMENHLNAKRLNNELGGSAENLFLKEEVGAGGGSAPSKHYKNSSPRSHNSTNGSVPSSSSNRSDKKQKCTGKNLAPHRDLMENCIPNNQLSKPDALVRLEQDIKKLKADLQASRQVEQDLRSQISSLSSAERSMRSELGQLRQENELLQNKLHNAVQAKQKDKQTIVQLEKRLKAEQEARAAVEKQLAEEKKRKKMEEATAARAVALAAASRGECTDSLKSRIRELESECKKLTHDMKLKEEQIRELELKAQELHKYKENEKDTEVLMSALSAMQDKTQHLENSLSAETRIKLDLFSALGDAKRQLEIAQGQILQKEQEIKELKQKIAEVMAVMPSITYSAETNNMTPVTPHYSSKFMDTSPSSLDPNASVYQPLKK.

4 consecutive transmembrane segments (helical) span residues 28 to 48 (TFLYLKFLVVWALVLLADFVL), 75 to 95 (AFSVFFVCVAFTSDIICLLFI), 120 to 140 (VCLPTVSLWILFVYIEAAIRF), and 154 to 174 (FAAHCIGYPVVTLGFGFKSYV). Positions 206–225 (QMLQRQERETEEATSKGMSE) are disordered. Over residues 210 to 219 (RQERETEEAT) the composition is skewed to basic and acidic residues. Asparagine 234, asparagine 336, asparagine 339, asparagine 348, and asparagine 655 each carry an N-linked (GlcNAc...) asparagine glycan. Disordered stretches follow at residues 315 to 364 (VGAG…LAPH) and 644 to 664 (FMDTSPSSLDPNASVYQPLKK). Residues 334 to 348 (SHNSTNGSVPSSSSN) show a composition bias toward low complexity. The segment covering 644–658 (FMDTSPSSLDPNASV) has biased composition (polar residues).

This sequence belongs to the macoilin family.

It localises to the nucleus membrane. The protein resides in the rough endoplasmic reticulum membrane. May play a role in the regulation of neuronal activity. The protein is Macoilin-1 of Danio rerio (Zebrafish).